Consider the following 236-residue polypeptide: MLTRKQHELLLFIHARLKETGIPPSFDEMKEALDLASKSGIHRLITALEERGFIRRLPNRARALEVLRLPDSIAPGLAAPRKFSPSVIEGGQGRSSPAPRPAANNDDETSVVSIPVMGRIAAGVPIDAIQHRTHSIGVPPDMITGGEHYALEVKGDSMIEAGIFDGDTVIIRQTQAANPGDIVVALVDEEEATLKRFRRKGASIALEAANPAYETRIFGPDRVKVQGRLVGLIRRY.

The H-T-H motif DNA-binding region spans 26 to 46 (FDEMKEALDLASKSGIHRLIT). A disordered region spans residues 84–107 (SPSVIEGGQGRSSPAPRPAANNDD). Catalysis depends on for autocatalytic cleavage activity residues Ser-157 and Lys-195.

The protein belongs to the peptidase S24 family. As to quaternary structure, homodimer.

The enzyme catalyses Hydrolysis of Ala-|-Gly bond in repressor LexA.. In terms of biological role, represses a number of genes involved in the response to DNA damage (SOS response), including recA and lexA. In the presence of single-stranded DNA, RecA interacts with LexA causing an autocatalytic cleavage which disrupts the DNA-binding part of LexA, leading to derepression of the SOS regulon and eventually DNA repair. The sequence is that of LexA repressor from Chelativorans sp. (strain BNC1).